The chain runs to 354 residues: Holliday junction branch migration complex subunit RuvB (354 aa).

The interval 4-198 (TTDYGASNTG…FGFTAHLDFY (195 aa)) is large ATPase domain (RuvB-L). Residues Leu37, Arg38, Gly79, Lys82, Thr83, Thr84, 145–147 (EDF), Arg188, Tyr198, and Arg235 contribute to the ATP site. Thr83 is a Mg(2+) binding site. The segment at 199–269 (PHEELEKLIE…DVKEALALYQ (71 aa)) is small ATPAse domain (RuvB-S). Residues 272–354 (SEGLDRLDIA…TPKDDVSKLF (83 aa)) form a head domain (RuvB-H) region. Residues Arg327 and Arg332 each coordinate DNA.

It belongs to the RuvB family. As to quaternary structure, homohexamer. Forms an RuvA(8)-RuvB(12)-Holliday junction (HJ) complex. HJ DNA is sandwiched between 2 RuvA tetramers; dsDNA enters through RuvA and exits via RuvB. An RuvB hexamer assembles on each DNA strand where it exits the tetramer. Each RuvB hexamer is contacted by two RuvA subunits (via domain III) on 2 adjacent RuvB subunits; this complex drives branch migration. In the full resolvosome a probable DNA-RuvA(4)-RuvB(12)-RuvC(2) complex forms which resolves the HJ.

The protein localises to the cytoplasm. The enzyme catalyses ATP + H2O = ADP + phosphate + H(+). In terms of biological role, the RuvA-RuvB-RuvC complex processes Holliday junction (HJ) DNA during genetic recombination and DNA repair, while the RuvA-RuvB complex plays an important role in the rescue of blocked DNA replication forks via replication fork reversal (RFR). RuvA specifically binds to HJ cruciform DNA, conferring on it an open structure. The RuvB hexamer acts as an ATP-dependent pump, pulling dsDNA into and through the RuvAB complex. RuvB forms 2 homohexamers on either side of HJ DNA bound by 1 or 2 RuvA tetramers; 4 subunits per hexamer contact DNA at a time. Coordinated motions by a converter formed by DNA-disengaged RuvB subunits stimulates ATP hydrolysis and nucleotide exchange. Immobilization of the converter enables RuvB to convert the ATP-contained energy into a lever motion, pulling 2 nucleotides of DNA out of the RuvA tetramer per ATP hydrolyzed, thus driving DNA branch migration. The RuvB motors rotate together with the DNA substrate, which together with the progressing nucleotide cycle form the mechanistic basis for DNA recombination by continuous HJ branch migration. Branch migration allows RuvC to scan DNA until it finds its consensus sequence, where it cleaves and resolves cruciform DNA. This is Holliday junction branch migration complex subunit RuvB from Bifidobacterium longum (strain NCC 2705).